We begin with the raw amino-acid sequence, 508 residues long: Cytochrome P450 monooxygenase tenA (508 aa).

Residues 8–24 traverse the membrane as a helical segment; the sequence is VSLPYLILSACLSVILL. Heme is bound at residue cysteine 456.

Belongs to the cytochrome P450 family. Heme serves as cofactor.

The protein localises to the membrane. Its pathway is secondary metabolite biosynthesis. Functionally, cytochrome P450 monooxygenase; part of the gene cluster that mediates the biosynthesis of tenellin-type 2-pyridones, iron-chelating compounds involved in iron stress tolerance, competition with the natural competitor fungus Metarhizium robertsii and insect hosts infection. TenA catalyzes an oxidative ring expansion of pretenellin A and 14-hydropretellenin A to form the 2-pyridone core, leading to the production of pretenellin B and pyridovericin, respectively. The pathway begins with the assembly of the polyketide-amino acid backbone by the hybrid PKS-NRPS tenS with the help of the enoyl reductase tenC. These enzymes catalyze the synthesis of the pyrrolidine-2-dione intermediates pretellinin A, 11-hydropretellenin A, 12-hydropretellenin A, 13-hydropretellenin A, 14-hydropretellenin A, 12-oxopretellenin A and prototellinin D. The cytochrome P450 monooxygenase tenA then catalyzes an oxidative ring expansion of pretenellin A and 14-hydropretellenin A to form the 2-pyridone core, leading to pretenellin B and pyridovericin, respectively. The cytochrome P450 monooxygenase tenB is then required for the selective N-hydroxylation of the 2-pyridone nitrogen of yield tellinin and 15-hydroxytellenin (15-HT), respectively. The UDP-glucosyltransferase GT1 and the methyltransferase MT1, located outside the tenS gene cluster, contribute to the stepwise glycosylation and methylation of 15-HT to obtain the glycoside pyridovericin-N-O-(4-O-methyl-beta-D-glucopyranoside) (PMGP). Additional related compounds such as 1-O-methyl-15-HT, (8Z)-1-O-methyl-15-HT, and O-methyltenellin A are also produced but the enzymes involved in their biosynthesis have still to be determined. This Beauveria bassiana (White muscardine disease fungus) protein is Cytochrome P450 monooxygenase tenA.